A 1558-amino-acid polypeptide reads, in one-letter code: ABC transporter NFT1 (1558 aa).

At 1-29 (MIKNGTCPYWERDDLSECARREYIEFKFP) the chain is on the extracellular side. Residue Asn-4 is glycosylated (N-linked (GlcNAc...) asparagine). Residues 30–50 (LFILLTGMIYAFCKVFRAFYL) form a helical membrane-spanning segment. The Cytoplasmic portion of the chain corresponds to 51 to 103 (RGKNHTNEAPEFEEQGNGNHEYARFSVLRLKSAWESRSFCNVNNRSTFDKFKK). The helical transmembrane segment at 104–124 (FIEGAFIVLQLTIHLYILSSM) threads the bilayer. The Extracellular segment spans residues 125–130 (PMDNKK). The chain crosses the membrane as a helical span at residues 131–151 (FFHQGFLVQMFLWILLLVVIT). The Cytoplasmic portion of the chain corresponds to 152 to 169 (LRLISASQSFRWVLACKR). A helical membrane pass occupies residues 170–190 (DLWAVSFYSYASLFTLSILPL). Residues 191 to 201 (RSVFIGKIKDK) lie on the Extracellular side of the membrane. A helical membrane pass occupies residues 202 to 222 (IMVKYIISETFIDLALLLLLS). Topologically, residues 223-302 (TSSIEGTRYS…SSKKGRLLPN (80 aa)) are cytoplasmic. The helical transmembrane segment at 303–323 (IICYFKAVFISQLFLAFVSSF) threads the bilayer. The region spanning 311–621 (FISQLFLAFV…IASTVSLLIQ (311 aa)) is the ABC transmembrane type-1 1 domain. Over 324–351 (LNFVPSLLMPRILSYVNDPKSKSWNLVS) the chain is Extracellular. Residues 352 to 374 (LYVSSMLVSKIIATTCRGQGLFL) form a helical membrane-spanning segment. Residues 375–449 (GEKGTMQLRT…VMSIDAFKVS (75 aa)) are Cytoplasmic-facing. The tract at residues 410-434 (NASTSFEENPDSSEAEPRKKSSRKD) is disordered. Positions 424–434 (AEPRKKSSRKD) are enriched in basic and acidic residues. The chain crosses the membrane as a helical span at residues 450 to 470 (EAMNTFYLACEAVFMTVTALM). Residues 471 to 481 (ILYSLLGWSAF) lie on the Extracellular side of the membrane. Residues 482–504 (AGTFALLAMIPLNFWCATFYGNY) traverse the membrane as a helical segment. Residues 505–558 (QADQLILTDKRTSGISEALNSIRVIKLLAWENLFYQKIINVRDGEIRLLKKKAT) are Cytoplasmic-facing. The helical transmembrane segment at 559–579 (IFFLNHLIWFFGPTLVSAITF) threads the bilayer. At 580–584 (SVFIK) the chain is on the extracellular side. Residues 585–605 (FQNQTLTPTIAFTALSLFAIL) traverse the membrane as a helical segment. The Cytoplasmic segment spans residues 606-953 (RTPMDQIAST…KFSAYKWLAD (348 aa)). In terms of domain architecture, ABC transporter 1 spans 651 to 892 (FGFEDASMEW…NEFLRESINN (242 aa)). 686–693 (GPTGSGKS) lines the ATP pocket. Residues 892-901 (NDSKNTTHNQ) are compositionally biased toward polar residues. Residues 892 to 926 (NDSKNTTHNQIDLKRSTTSKKTKNGDPEGGNSQDE) form a disordered region. A helical membrane pass occupies residues 954–974 (YFGGLGVVFVFTSSSILIHGI). Residues 961 to 1251 (VFVFTSSSIL…IIKVFSSVEL (291 aa)) form the ABC transmembrane type-1 2 domain. Over 975 to 1013 (TLSQGFWLRYWLDTGSSGSKSTWLYRIVEGHSNIYFLLT) the chain is Extracellular. A helical transmembrane segment spans residues 1014–1034 (YIIIGLVSSFLTSGKVWIAII). Topologically, residues 1035–1082 (SGTNVTKKIFAKLLSSILYAKLRFHNVTPTGRIMNRFSKDMDIIDQQL) are cytoplasmic. A helical transmembrane segment spans residues 1083–1105 (IPNFEGLSYSVVVCLWIILLIGY). At 1106–1109 (VTPQ) the chain is on the extracellular side. Residues 1110–1132 (FLLFAIPLCALYYTVCTLYLRAS) form a helical membrane-spanning segment. At 1133–1199 (RELKRIDNIN…ATEWITYRVD (67 aa)) the chain is on the cytoplasmic side. The chain crosses the membrane as a helical span at residues 1200 to 1220 (IIGTLVLFSSSVMIIMKASYL). At 1221 to 1222 (DA) the chain is on the extracellular side. The helical transmembrane segment at 1223-1243 (GLAGILLSNAFSFTETAQWII) threads the bilayer. At 1244 to 1558 (KVFSSVELLM…LAKVSFDNKR (315 aa)) the chain is on the cytoplasmic side. Residues 1285-1538 (VELKNLSLRY…RNTIFYRLCR (254 aa)) form the ABC transporter 2 domain. ATP is bound at residue 1319-1326 (GRTGAGKS).

It belongs to the ABC transporter superfamily. ABCC family. Conjugate transporter (TC 3.A.1.208) subfamily.

It localises to the membrane. The sequence is that of ABC transporter NFT1 (NFT1) from Saccharomyces cerevisiae (Baker's yeast).